Here is a 185-residue protein sequence, read N- to C-terminus: ATP synthase subunit delta (185 aa).

This sequence belongs to the ATPase delta chain family. As to quaternary structure, F-type ATPases have 2 components, F(1) - the catalytic core - and F(0) - the membrane proton channel. F(1) has five subunits: alpha(3), beta(3), gamma(1), delta(1), epsilon(1). CF(0) has four main subunits: a(1), b(1), b'(1) and c(10-14). The alpha and beta chains form an alternating ring which encloses part of the gamma chain. F(1) is attached to F(0) by a central stalk formed by the gamma and epsilon chains, while a peripheral stalk is formed by the delta, b and b' chains.

The protein localises to the cellular thylakoid membrane. F(1)F(0) ATP synthase produces ATP from ADP in the presence of a proton or sodium gradient. F-type ATPases consist of two structural domains, F(1) containing the extramembraneous catalytic core and F(0) containing the membrane proton channel, linked together by a central stalk and a peripheral stalk. During catalysis, ATP synthesis in the catalytic domain of F(1) is coupled via a rotary mechanism of the central stalk subunits to proton translocation. Functionally, this protein is part of the stalk that links CF(0) to CF(1). It either transmits conformational changes from CF(0) to CF(1) or is implicated in proton conduction. In Cyanothece sp. (strain PCC 7425 / ATCC 29141), this protein is ATP synthase subunit delta.